The sequence spans 98 residues: HssA/B-like protein 36 (98 aa).

The disordered stretch occupies residues 1–29 (MTLFSSISSISNPMTSSKSSISSFGSGTS).

It belongs to the hssA/B family.

The polypeptide is HssA/B-like protein 36 (hssl36) (Dictyostelium discoideum (Social amoeba)).